Reading from the N-terminus, the 302-residue chain is Glycine--tRNA ligase alpha subunit (302 aa).

Belongs to the class-II aminoacyl-tRNA synthetase family. As to quaternary structure, tetramer of two alpha and two beta subunits.

The protein localises to the cytoplasm. The catalysed reaction is tRNA(Gly) + glycine + ATP = glycyl-tRNA(Gly) + AMP + diphosphate. The polypeptide is Glycine--tRNA ligase alpha subunit (Enterococcus faecalis (strain ATCC 700802 / V583)).